A 509-amino-acid chain; its full sequence is Cytochrome P450 monooxygenase cpaH (509 aa).

Asn-15 carries an N-linked (GlcNAc...) asparagine glycan. A helical transmembrane segment spans residues 31 to 51 (TTILLIGVTYCILVGIYRVTL). N-linked (GlcNAc...) asparagine glycosylation is found at Asn-306 and Asn-412. Cys-453 lines the heme pocket.

The protein belongs to the cytochrome P450 family. It depends on heme as a cofactor.

It localises to the membrane. It participates in secondary metabolite biosynthesis. In terms of biological role, cytochrome P450 monooxygenase; part of the gene cluster that mediates the biosynthesis of the fungal neurotoxin cyclopiazonic acid (CPA), a nanomolar inhibitor of Ca(2+)-ATPase with a unique pentacyclic indole tetramic acid scaffold. The hybrid two module polyketide synthase-nonribosomal peptide synthetase (PKS-NRPS) cpaS incorporates acetyl-CoA, malonyl-CoA, and tryptophan (Trp) and utilizes a C-terminal redox-incompetent reductase domain to make and release the tryptophan tetramic acid, cyclo-acetoacetyl-L-tryptophan (c-AATrp), as the first intermediate in the pathway. CpaS catalyzes a Dieckmann-type cyclization on the N-acetoacetyl-Trp intermediate bound in thioester linkage to the phosphopantetheinyl arm of the T domain to form and release c-AATrp. CpaD then regiospecifically dimethylallylates c-AATrp to form beta-cyclopiazonic acid. CpaD discriminates against free Trp but accepts tryptophan-containing thiohydantoins, diketopiperazines, and linear peptides as substrates for C4-prenylation and also acts as a regiospecific O-dimethylallyltransferase (DMAT) on a tyrosine-derived tetramic acid. The beta-cyclopiazonate dehydrogenase cpaO then carries out the dehydrogenation of beta-CPA to yield an unstable enimine product, which is captured by intramolecular cyclization to create the pentacyclic fused scaffold of alpha-cyclopiazonate. Finally, the cytochrome P450 monooxygenase cpaH mediates the conversion of CPA into the less toxic 2-oxocyclopiazonic acid, the end product of the CPA pathway in A.oryza. The polypeptide is Cytochrome P450 monooxygenase cpaH (Aspergillus oryzae (Yellow koji mold)).